Here is a 204-residue protein sequence, read N- to C-terminus: B9 domain-containing protein 1 (204 aa).

One can recognise a C2 B9-type domain in the interval 9–127 (FLLMITGQVE…TIPMFVPEST (119 aa)).

Belongs to the B9D family. In terms of assembly, part of the tectonic-like complex (also named B9 complex).

The protein localises to the cytoplasm. Its subcellular location is the cytoskeleton. It localises to the cilium basal body. Component of the tectonic-like complex, a complex localized at the transition zone of primary cilia and acting as a barrier that prevents diffusion of transmembrane proteins between the cilia and plasma membranes. Required for ciliogenesis and sonic hedgehog/SHH signaling. The sequence is that of B9 domain-containing protein 1 (B9d1) from Mus musculus (Mouse).